Here is a 226-residue protein sequence, read N- to C-terminus: PKHD-type hydroxylase AZC_3753 (226 aa).

Residues 78-178 enclose the Fe2OG dioxygenase domain; the sequence is RILPPMFNRY…RVASFFWTQS (101 aa). Fe cation is bound by residues H96, D98, and H159. R169 provides a ligand contact to 2-oxoglutarate.

Fe(2+) serves as cofactor. It depends on L-ascorbate as a cofactor.

This is PKHD-type hydroxylase AZC_3753 from Azorhizobium caulinodans (strain ATCC 43989 / DSM 5975 / JCM 20966 / LMG 6465 / NBRC 14845 / NCIMB 13405 / ORS 571).